Here is a 339-residue protein sequence, read N- to C-terminus: Protein RecA (339 aa).

An ATP-binding site is contributed by 66–73; sequence GPESSGKT.

This sequence belongs to the RecA family.

The protein resides in the cytoplasm. Functionally, can catalyze the hydrolysis of ATP in the presence of single-stranded DNA, the ATP-dependent uptake of single-stranded DNA by duplex DNA, and the ATP-dependent hybridization of homologous single-stranded DNAs. It interacts with LexA causing its activation and leading to its autocatalytic cleavage. The polypeptide is Protein RecA (Geobacter metallireducens (strain ATCC 53774 / DSM 7210 / GS-15)).